Reading from the N-terminus, the 140-residue chain is Nucleoside diphosphate kinase (140 aa).

Residues lysine 11, phenylalanine 59, arginine 87, threonine 93, arginine 104, and asparagine 114 each contribute to the ATP site. Catalysis depends on histidine 117, which acts as the Pros-phosphohistidine intermediate.

The protein belongs to the NDK family. As to quaternary structure, homotetramer. It depends on Mg(2+) as a cofactor.

Its subcellular location is the cytoplasm. The catalysed reaction is a 2'-deoxyribonucleoside 5'-diphosphate + ATP = a 2'-deoxyribonucleoside 5'-triphosphate + ADP. It catalyses the reaction a ribonucleoside 5'-diphosphate + ATP = a ribonucleoside 5'-triphosphate + ADP. In terms of biological role, major role in the synthesis of nucleoside triphosphates other than ATP. The ATP gamma phosphate is transferred to the NDP beta phosphate via a ping-pong mechanism, using a phosphorylated active-site intermediate. The polypeptide is Nucleoside diphosphate kinase (Methylorubrum extorquens (strain CM4 / NCIMB 13688) (Methylobacterium extorquens)).